Here is a 479-residue protein sequence, read N- to C-terminus: MGPMIRGDRDKDTICAISTPHGVGGISVIRVSGPQTLNIVSKICQFLPAHPESHKVYFGNLKNSQTGDEIDEVLATYFKEGRSFTGEEVIEISCHGSPLICQTILNQLVNLGARPADRGEFTFRAFMNGKLDLVQAESVLSLIESQSQQAAKLALRQLKGTLSHKLEEIEDDMTWILAHAEASIDFSTEGIEVIEENVIQVRLKKIEAGLKELVATFKVGRLLKDGFRIVLTGLPNVGKSSLLNLFLEDERAIVTDIPGTTRDVIHGDTTFEGVKFTFVDTAGLRDEATDLVERIGIQKSYEAQNESDVVFFVYDIEKGLGAEELQILESLDPAKTYILANKTDKIGGSKPLETVEKTLKNSKFFQKLADPAAFFTRRVFFVSALDKKVRSEVLKDLVKEFADLQVENTVLISNARHFENLTRALENTQRSQSVVAQGLGAEFLALEFKEALIAIHETLGKRFDDQIMDRVFKEFCIGK.

Arg30, Glu91, and Lys130 together coordinate (6S)-5-formyl-5,6,7,8-tetrahydrofolate. Positions Gly226–Ala402 constitute a TrmE-type G domain. Asn236 provides a ligand contact to K(+). Residues Asn236–Ser241, Thr255–Thr261, and Asp280–Gly283 each bind GTP. Ser240 is a Mg(2+) binding site. Thr255, Ile257, and Thr260 together coordinate K(+). Thr261 provides a ligand contact to Mg(2+). Lys479 lines the (6S)-5-formyl-5,6,7,8-tetrahydrofolate pocket.

This sequence belongs to the TRAFAC class TrmE-Era-EngA-EngB-Septin-like GTPase superfamily. TrmE GTPase family. As to quaternary structure, homodimer. Heterotetramer of two MnmE and two MnmG subunits. Requires K(+) as cofactor.

It localises to the cytoplasm. In terms of biological role, exhibits a very high intrinsic GTPase hydrolysis rate. Involved in the addition of a carboxymethylaminomethyl (cmnm) group at the wobble position (U34) of certain tRNAs, forming tRNA-cmnm(5)s(2)U34. The sequence is that of tRNA modification GTPase MnmE from Bdellovibrio bacteriovorus (strain ATCC 15356 / DSM 50701 / NCIMB 9529 / HD100).